We begin with the raw amino-acid sequence, 197 residues long: RNA pyrophosphohydrolase (197 aa).

The region spanning 6-149 (GYRPNVGIVI…KRDVYRRAMK (144 aa)) is the Nudix hydrolase domain. The Nudix box motif lies at 38-59 (GGINEGETPEQAMFRELFEEVG). Positions 170–197 (ETKKAETGKKQPYYHKYAPQNKKGRKRR) are disordered.

It belongs to the Nudix hydrolase family. RppH subfamily. The cofactor is a divalent metal cation.

Functionally, accelerates the degradation of transcripts by removing pyrophosphate from the 5'-end of triphosphorylated RNA, leading to a more labile monophosphorylated state that can stimulate subsequent ribonuclease cleavage. This is RNA pyrophosphohydrolase from Actinobacillus succinogenes (strain ATCC 55618 / DSM 22257 / CCUG 43843 / 130Z).